The following is a 247-amino-acid chain: 3-oxoacyl-[acyl-carrier-protein] reductase MabA (247 aa).

NADP(+) contacts are provided by residues 25 to 27 (RGI), Arg47, 61 to 62 (DV), Gly90, Tyr153, Lys157, Ile186, and Arg197. The active-site Proton acceptor is the Tyr153.

The protein belongs to the short-chain dehydrogenases/reductases (SDR) family. In terms of assembly, homotetramer.

The protein resides in the secreted. It is found in the cell wall. It catalyses the reaction a (3R)-hydroxyacyl-[ACP] + NADP(+) = a 3-oxoacyl-[ACP] + NADPH + H(+). Its pathway is lipid metabolism; mycolic acid biosynthesis. Functionally, part of the mycobacterial fatty acid elongation system FAS-II, which is involved in mycolic acid biosynthesis. Catalyzes the NADPH-dependent reduction of beta-ketoacyl derivatives, the second step of the FAS-II elongation cycle. This Mycobacterium bovis (strain ATCC BAA-935 / AF2122/97) protein is 3-oxoacyl-[acyl-carrier-protein] reductase MabA.